Consider the following 241-residue polypeptide: 1-(5-phosphoribosyl)-5-[(5-phosphoribosylamino)methylideneamino] imidazole-4-carboxamide isomerase (241 aa).

Asp-8 acts as the Proton acceptor in catalysis. Asp-129 (proton donor) is an active-site residue.

It belongs to the HisA/HisF family.

The protein localises to the cytoplasm. It catalyses the reaction 1-(5-phospho-beta-D-ribosyl)-5-[(5-phospho-beta-D-ribosylamino)methylideneamino]imidazole-4-carboxamide = 5-[(5-phospho-1-deoxy-D-ribulos-1-ylimino)methylamino]-1-(5-phospho-beta-D-ribosyl)imidazole-4-carboxamide. It functions in the pathway amino-acid biosynthesis; L-histidine biosynthesis; L-histidine from 5-phospho-alpha-D-ribose 1-diphosphate: step 4/9. This Rhodospirillum rubrum (strain ATCC 11170 / ATH 1.1.1 / DSM 467 / LMG 4362 / NCIMB 8255 / S1) protein is 1-(5-phosphoribosyl)-5-[(5-phosphoribosylamino)methylideneamino] imidazole-4-carboxamide isomerase.